The following is a 245-amino-acid chain: 1-(5-phosphoribosyl)-5-[(5-phosphoribosylamino)methylideneamino] imidazole-4-carboxamide isomerase (245 aa).

Catalysis depends on D8, which acts as the Proton acceptor. Residue D129 is the Proton donor of the active site.

This sequence belongs to the HisA/HisF family.

Its subcellular location is the cytoplasm. It catalyses the reaction 1-(5-phospho-beta-D-ribosyl)-5-[(5-phospho-beta-D-ribosylamino)methylideneamino]imidazole-4-carboxamide = 5-[(5-phospho-1-deoxy-D-ribulos-1-ylimino)methylamino]-1-(5-phospho-beta-D-ribosyl)imidazole-4-carboxamide. The protein operates within amino-acid biosynthesis; L-histidine biosynthesis; L-histidine from 5-phospho-alpha-D-ribose 1-diphosphate: step 4/9. The protein is 1-(5-phosphoribosyl)-5-[(5-phosphoribosylamino)methylideneamino] imidazole-4-carboxamide isomerase of Rhodopseudomonas palustris (strain BisB18).